A 251-amino-acid chain; its full sequence is Histocompatibility antigen 60b (251 aa).

The signal sequence occupies residues 1–24; sequence MAKSSLSLNWSLLVLLNFLGATLS. Residues 25–212 are Extracellular-facing; it reads TGTDSLSCEL…NSDTQGLSFT (188 aa). Asparagine 63, asparagine 93, asparagine 126, and asparagine 189 each carry an N-linked (GlcNAc...) asparagine glycan. The helical transmembrane segment at 213-233 threads the bilayer; sequence WIVIICIGGIVSFMAFMVFAW. The Cytoplasmic segment spans residues 234-251; it reads CMLKKKKGALCCSSSSTT.

This sequence belongs to the NKG2D ligand family. In strain C57BL/6J, strongly expressed in cardiac muscle and skeletal muscle, with lower expression levels in spleen, liver, kidney and thymus. In strain BALB/cJ, weakly expressed in cardiac muscle, spleen, kidney and thymus.

The protein resides in the cell membrane. Functionally, ligand for the KLRK1 immunosurveillance receptor. Binding to KLRK1 stimulates cell lysis in vitro. The protein is Histocompatibility antigen 60b of Mus musculus (Mouse).